Here is a 213-residue protein sequence, read N- to C-terminus: MKKILFLTVICFCLSSIKAYANNNIHLSEFKNYLRTIKSVAIDFTQEDSYGKIVKGKLLIQKPYNFRCNYYPPFPLVIIGTKNFVSMYDYDMEQVSRISPSENIFNFLLEDNVDFDKDFVFESVINKGNIFNITIYHTRTEKRSEITFNKNIKQIEKLKIFEDHNIVTITFDKITKVQKFSDDLFKFKNPEIFSPPERLIKSEIEKKYVVSSK.

The N-terminal stretch at 1–21 (MKKILFLTVICFCLSSIKAYA) is a signal peptide.

This is an uncharacterized protein from Rickettsia prowazekii (strain Madrid E).